We begin with the raw amino-acid sequence, 580 residues long: Formate--tetrahydrofolate ligase (580 aa).

Position 83–90 (83–90 (TPMGEGKT)) interacts with ATP.

This sequence belongs to the formate--tetrahydrofolate ligase family.

It catalyses the reaction (6S)-5,6,7,8-tetrahydrofolate + formate + ATP = (6R)-10-formyltetrahydrofolate + ADP + phosphate. It participates in one-carbon metabolism; tetrahydrofolate interconversion. This Haloquadratum walsbyi (strain DSM 16790 / HBSQ001) protein is Formate--tetrahydrofolate ligase.